The chain runs to 89 residues: Elongation factor 1-beta (89 aa).

The protein belongs to the EF-1-beta/EF-1-delta family.

Promotes the exchange of GDP for GTP in EF-1-alpha/GDP, thus allowing the regeneration of EF-1-alpha/GTP that could then be used to form the ternary complex EF-1-alpha/GTP/AAtRNA. This chain is Elongation factor 1-beta, found in Methanococcus maripaludis (strain C7 / ATCC BAA-1331).